Reading from the N-terminus, the 559-residue chain is Kelch repeat and BTB domain-containing protein 2 (559 aa).

The BTB domain occupies Cys-26–Asn-95. Residues Cys-128–Lys-223 enclose the BACK domain. 3 Kelch repeats span residues Glu-305 to Asp-352, Met-353 to Gln-399, and Ile-401 to Asp-463.

Interacts (via BTB domain) with host CUL3.

Its subcellular location is the host cytoplasm. In terms of biological role, probable substrate-specific adapter of CUL3-containing E3 ubiquitin-protein ligases which mediate the ubiquitination and subsequent proteasomal degradation of host target proteins. This Mus musculus (Mouse) protein is Kelch repeat and BTB domain-containing protein 2 (KBTB2).